A 208-amino-acid polypeptide reads, in one-letter code: OVARIAN TUMOR DOMAIN-containing deubiquitinating enzyme 2 (208 aa).

Residues 5-127 (IVRRVIPSDN…GLHYDALALS (123 aa)) enclose the OTU domain. Residue D13 is part of the active site. C16 serves as the catalytic Nucleophile. Residues H120 and H201 contribute to the active site.

This sequence belongs to the peptidase C85 family.

The enzyme catalyses Thiol-dependent hydrolysis of ester, thioester, amide, peptide and isopeptide bonds formed by the C-terminal Gly of ubiquitin (a 76-residue protein attached to proteins as an intracellular targeting signal).. Its function is as follows. Hydrolase that can remove conjugated ubiquitin from proteins in vitro and may therefore play an important regulatory role at the level of protein turnover by preventing degradation. Cysteine protease with a preference for 'Lys-63' and 'Lys-48' -linked ubiquitin (UB) tetramers as substrates. This chain is OVARIAN TUMOR DOMAIN-containing deubiquitinating enzyme 2, found in Arabidopsis thaliana (Mouse-ear cress).